Reading from the N-terminus, the 376-residue chain is UDP-N-acetylglucosamine 2-epimerase (376 aa).

Substrate contacts are provided by residues R10, K15, D95, E117, H213, Q271, F276, 290–292 (SGG), E296, and R313.

It belongs to the UDP-N-acetylglucosamine 2-epimerase family. In terms of assembly, homodimer.

Its subcellular location is the cytoplasm. The catalysed reaction is UDP-N-acetyl-alpha-D-glucosamine = UDP-N-acetyl-alpha-D-mannosamine. The protein operates within bacterial outer membrane biogenesis; enterobacterial common antigen biosynthesis. Allosterically activated by its substrate, UDP-GlcNAc. Its function is as follows. Catalyzes the reversible epimerization at C-2 of UDP-N-acetylglucosamine (UDP-GlcNAc) and thereby provides bacteria with UDP-N-acetylmannosamine (UDP-ManNAc), the activated donor of ManNAc residues. Also involved in bacteriophage N4 adsorption. This is UDP-N-acetylglucosamine 2-epimerase from Escherichia coli (strain K12).